The following is a 502-amino-acid chain: MADKADKMKARLPRGFVDRVPDDLRAAEKMMATIREVYDLYGFEPVETPLVEYTDALGKFLPDQDRPNEGVFSFQDDDEQWLSLRYDLTAPLARYVAENFETLPKPYRSYRNGWVFRNEKPGPGRFRQFMQFDADTVGAPNVSADAEMCMMMADTLERLGIQRGDYAIRVNNRKVLDGVLDAIGLEGEGNAAKRLNVLRAIDKLDKFGPEGVRLLLGKGRLDESGDFTKGAQLPEAAIEKVLAFTAAGGADGAQTIANLQAVVAGNAKGEEGVQELADMQALFFAGGYEGRVKIDPSVVRGLEYYTGPVFEAELLFDVTNEDGQKVVFGSVGGGGRYDGLVSRFRGEPVPATGFSIGVSRLMTALKNLGKLDVSDTVGPVVVLVMDKDTQNLGRYQKMVSDLRKAGIRAEMYVGGSGMKAQMKYADRRAAPCVVIQGSQEREAGEVQIKDLVEGKRLSAEIEDNVTWLESRPAQITVREDGLVDAVREILDAQARDRAEQSK.

Belongs to the class-II aminoacyl-tRNA synthetase family. In terms of assembly, homodimer.

It is found in the cytoplasm. The catalysed reaction is tRNA(His) + L-histidine + ATP = L-histidyl-tRNA(His) + AMP + diphosphate + H(+). The protein is Histidine--tRNA ligase of Brucella abortus (strain S19).